Consider the following 651-residue polypeptide: Chaperone protein HtpG (651 aa).

Positions 1–353 (MAPHVEQLEF…AQDMSLNVSR (353 aa)) are a; substrate-binding. A b region spans residues 354–569 (EILQQDRQIR…TFGITPALAR (216 aa)). The interval 570–651 (MYRASGQPVP…RLTRMVGEQS (82 aa)) is c.

This sequence belongs to the heat shock protein 90 family. As to quaternary structure, homodimer.

The protein resides in the cytoplasm. Functionally, molecular chaperone. Has ATPase activity. The sequence is that of Chaperone protein HtpG from Mycolicibacterium gilvum (strain PYR-GCK) (Mycobacterium gilvum (strain PYR-GCK)).